The chain runs to 105 residues: Nucleoid-associated protein SSP2277 (105 aa).

The interval 1–41 is disordered; sequence MRGGGNMQQMMKQMQKMQKKMGEEQEKLKEEKVQGTAGGGM. Residues 7-16 are compositionally biased toward low complexity; sequence MQQMMKQMQK. Over residues 20–33 the composition is skewed to basic and acidic residues; that stretch reads KMGEEQEKLKEEKV.

The protein belongs to the YbaB/EbfC family. As to quaternary structure, homodimer.

Its subcellular location is the cytoplasm. The protein resides in the nucleoid. Binds to DNA and alters its conformation. May be involved in regulation of gene expression, nucleoid organization and DNA protection. This is Nucleoid-associated protein SSP2277 from Staphylococcus saprophyticus subsp. saprophyticus (strain ATCC 15305 / DSM 20229 / NCIMB 8711 / NCTC 7292 / S-41).